The sequence spans 344 residues: Dihydroorotate dehydrogenase (quinone) (344 aa).

FMN-binding positions include A64–K68 and T88. K68 serves as a coordination point for substrate. Position 113–117 (N113–F117) interacts with substrate. FMN is bound by residues N144 and N177. N177 contacts substrate. The active-site Nucleophile is the S180. A substrate-binding site is contributed by N182. The FMN site is built by K222 and T250. N251–T252 contacts substrate. FMN is bound by residues G273, G302, and Y323–S324.

It belongs to the dihydroorotate dehydrogenase family. Type 2 subfamily. In terms of assembly, monomer. Requires FMN as cofactor.

Its subcellular location is the cell membrane. The catalysed reaction is (S)-dihydroorotate + a quinone = orotate + a quinol. It functions in the pathway pyrimidine metabolism; UMP biosynthesis via de novo pathway; orotate from (S)-dihydroorotate (quinone route): step 1/1. Catalyzes the conversion of dihydroorotate to orotate with quinone as electron acceptor. The protein is Dihydroorotate dehydrogenase (quinone) of Polynucleobacter asymbioticus (strain DSM 18221 / CIP 109841 / QLW-P1DMWA-1) (Polynucleobacter necessarius subsp. asymbioticus).